A 76-amino-acid polypeptide reads, in one-letter code: Small ribosomal subunit protein bS18 (76 aa).

The protein belongs to the bacterial ribosomal protein bS18 family. Part of the 30S ribosomal subunit. Forms a tight heterodimer with protein bS6.

Functionally, binds as a heterodimer with protein bS6 to the central domain of the 16S rRNA, where it helps stabilize the platform of the 30S subunit. This is Small ribosomal subunit protein bS18 from Ectopseudomonas mendocina (strain ymp) (Pseudomonas mendocina).